The following is a 439-amino-acid chain: Ribosomal protein uS12 methylthiotransferase RimO (439 aa).

In terms of domain architecture, MTTase N-terminal spans 3 to 115 (NKLHIVSLGC…IDELLVEKKS (113 aa)). C12, C46, C78, C146, C150, and C153 together coordinate [4Fe-4S] cluster. Residues 132–361 (TGSTYHAYIK…GKIAADVMQA (230 aa)) enclose the Radical SAM core domain.

It belongs to the methylthiotransferase family. RimO subfamily. Requires [4Fe-4S] cluster as cofactor.

Its subcellular location is the cytoplasm. The enzyme catalyses L-aspartate(89)-[ribosomal protein uS12]-hydrogen + (sulfur carrier)-SH + AH2 + 2 S-adenosyl-L-methionine = 3-methylsulfanyl-L-aspartate(89)-[ribosomal protein uS12]-hydrogen + (sulfur carrier)-H + 5'-deoxyadenosine + L-methionine + A + S-adenosyl-L-homocysteine + 2 H(+). Catalyzes the methylthiolation of an aspartic acid residue of ribosomal protein uS12. In Sulfurimonas denitrificans (strain ATCC 33889 / DSM 1251) (Thiomicrospira denitrificans (strain ATCC 33889 / DSM 1251)), this protein is Ribosomal protein uS12 methylthiotransferase RimO.